We begin with the raw amino-acid sequence, 216 residues long: ADP-ribosylation factor D (216 aa).

Residues 188-204 are compositionally biased toward low complexity; it reads SKFSFSNKSKQQKSNSQ. The interval 188–216 is disordered; sequence SKFSFSNKSKQQKSNSQPNTPRKNIQMMT. The segment covering 205–216 has biased composition (polar residues); it reads PNTPRKNIQMMT.

This sequence belongs to the small GTPase superfamily. Arf family.

Its subcellular location is the golgi apparatus. In terms of biological role, GTP-binding protein involved in protein trafficking; may modulate vesicle budding and uncoating within the Golgi apparatus. The sequence is that of ADP-ribosylation factor D (arrD) from Dictyostelium discoideum (Social amoeba).